Reading from the N-terminus, the 196-residue chain is GTP cyclohydrolase 1 (196 aa).

The Zn(2+) site is built by Cys86, His89, and Cys158.

Belongs to the GTP cyclohydrolase I family. As to quaternary structure, homomer.

It carries out the reaction GTP + H2O = 7,8-dihydroneopterin 3'-triphosphate + formate + H(+). Its pathway is cofactor biosynthesis; 7,8-dihydroneopterin triphosphate biosynthesis; 7,8-dihydroneopterin triphosphate from GTP: step 1/1. This Clostridium botulinum (strain Kyoto / Type A2) protein is GTP cyclohydrolase 1.